Consider the following 104-residue polypeptide: UPF0145 protein GTNG_1265 (104 aa).

The protein belongs to the UPF0145 family.

This is UPF0145 protein GTNG_1265 from Geobacillus thermodenitrificans (strain NG80-2).